We begin with the raw amino-acid sequence, 305 residues long: Probable lipid kinase YegS-like (305 aa).

Positions 2–134 constitute a DAGKc domain; the sequence is HPPAPALLII…DLAKVNDQRY (133 aa). Residues Thr-40, 66–72, and Thr-95 contribute to the ATP site; that span reads GDGTINE. Mg(2+) contacts are provided by Leu-215, Asp-218, and Leu-220. The active-site Proton acceptor is the Glu-271.

The protein belongs to the diacylglycerol/lipid kinase family. YegS lipid kinase subfamily. The cofactor is Mg(2+). Requires Ca(2+) as cofactor.

It localises to the cytoplasm. Probably phosphorylates lipids; the in vivo substrate is unknown. This is Probable lipid kinase YegS-like from Serratia proteamaculans (strain 568).